Reading from the N-terminus, the 457-residue chain is MQKYTSEARQLLALAIPVILAQVAQTAMGFVDTVMAGGYSATDMAAVAIGTSIWLPAILFGHGLLLALTPVIAQLNGSGRRERIAHQVRQGFWLAGFVSVLVMIVLWNAGYIIRSMHNIDPALADKAVGYLRALLWGAPGYLFFQVARNQCEGLAKTKPGMVMGFLGLLVNIPVNYIFIYGHFGMPELGGIGCGVATAAVYWVMFIAMLSYIKHARSMRDIRNEKGFGKPDSVAMKRLIQLGLPIALALFFEVTLFAVVALLVSPLGIVDVAGHQIALNFSSLMFVLPMSLAAAVTIRVGYRLGQGSTLDAQTAARTGLGVGICMAVVTAIFTVTLRKHIALLYNDNPEVVALAAQLMLLAAVYQISDSIQVIGSGILRGYKDTRSIFFITFTAYWVLGLPSGYILALTDLVVDRMGPAGFWMGFIIGLTSAAVLMMLRMRYLQRQPSAIILQRAAR.

The next 12 helical transmembrane spans lie at 11-31 (LLALAIPVILAQVAQTAMGFV), 53-73 (IWLPAILFGHGLLLALTPVIA), 93-113 (WLAGFVSVLVMIVLWNAGYII), 127-147 (AVGYLRALLWGAPGYLFFQVA), 160-180 (GMVMGFLGLLVNIPVNYIFIY), 188-208 (LGGIGCGVATAAVYWVMFIAM), 243-263 (LPIALALFFEVTLFAVVALLV), 276-296 (IALNFSSLMFVLPMSLAAAVT), 314-334 (AARTGLGVGICMAVVTAIFTV), 350-370 (VVALAAQLMLLAAVYQISDSI), 387-407 (IFFITFTAYWVLGLPSGYILA), and 418-438 (PAGFWMGFIIGLTSAAVLMML).

Belongs to the multi antimicrobial extrusion (MATE) (TC 2.A.66.1) family. MdtK subfamily.

It localises to the cell inner membrane. Multidrug efflux pump that functions probably as a Na(+)/drug antiporter. The chain is Multidrug resistance protein MdtK from Salmonella heidelberg (strain SL476).